Here is a 248-residue protein sequence, read N- to C-terminus: Adenosylcobinamide-GDP ribazoletransferase (248 aa).

7 consecutive transmembrane segments (helical) span residues 32–52 (FPLV…IGMV), 60–80 (ALLV…DGLA), 103–123 (AVGS…WIAL), 134–154 (WIVS…SVMT), 170–190 (AGGW…VLVM), 195–215 (LPIV…GMLA), and 227–247 (LGAS…LLLF).

The protein belongs to the CobS family. Requires Mg(2+) as cofactor.

The protein localises to the cell inner membrane. The catalysed reaction is alpha-ribazole + adenosylcob(III)inamide-GDP = adenosylcob(III)alamin + GMP + H(+). It carries out the reaction alpha-ribazole 5'-phosphate + adenosylcob(III)inamide-GDP = adenosylcob(III)alamin 5'-phosphate + GMP + H(+). It functions in the pathway cofactor biosynthesis; adenosylcobalamin biosynthesis; adenosylcobalamin from cob(II)yrinate a,c-diamide: step 7/7. In terms of biological role, joins adenosylcobinamide-GDP and alpha-ribazole to generate adenosylcobalamin (Ado-cobalamin). Also synthesizes adenosylcobalamin 5'-phosphate from adenosylcobinamide-GDP and alpha-ribazole 5'-phosphate. The chain is Adenosylcobinamide-GDP ribazoletransferase from Prosthecochloris aestuarii (strain DSM 271 / SK 413).